We begin with the raw amino-acid sequence, 265 residues long: PBSX phage terminase small subunit (265 aa).

Residues 241–265 (KQKAEKTDDSQEPIEIMIKRKERKS) form a disordered region.

This sequence to B.subtilis YqaS and B.subtilis phage SPP1 terminase small subunit. Dimer of a small and a large subunit.

Functionally, functions as a terminase. This is PBSX phage terminase small subunit (xtmA) from Bacillus subtilis (strain 168).